Consider the following 240-residue polypeptide: Glutathione S-transferase theta-1 (240 aa).

Residues 2-82 form the GST N-terminal domain; that stretch reads GLELYLDLLS…YLARKYKVPD (81 aa). Glutathione contacts are provided by residues histidine 40, 53-54, and 66-67; these read KV and ES. The GST C-terminal domain occupies 88 to 226; sequence DLQACARVDE…AKDSQPADPT (139 aa).

This sequence belongs to the GST superfamily. Theta family. In terms of assembly, homodimer.

The protein resides in the cytoplasm. It carries out the reaction RX + glutathione = an S-substituted glutathione + a halide anion + H(+). Conjugation of reduced glutathione to a wide number of exogenous and endogenous hydrophobic electrophiles. Also binds steroids, bilirubin, carcinogens and numerous organic anions. Has dichloromethane dehalogenase activity. This is Glutathione S-transferase theta-1 (GSTT1) from Bos taurus (Bovine).